A 147-amino-acid chain; its full sequence is Deoxyuridine 5'-triphosphate nucleotidohydrolase (147 aa).

Position 24 (arginine 24) interacts with Mg(2+). Residues 68-70 (PRS), 82-85 (GVID), tyrosine 88, glycine 93, isoleucine 95, and arginine 111 each bind dUTP.

It belongs to the dUTPase family. Requires Mg(2+) as cofactor.

The enzyme catalyses dUTP + H2O = dUMP + diphosphate + H(+). This enzyme is involved in nucleotide metabolism: it produces dUMP, the immediate precursor of thymidine nucleotides and it decreases the intracellular concentration of dUTP so that uracil cannot be incorporated into DNA. In Homo sapiens (Human), this protein is Deoxyuridine 5'-triphosphate nucleotidohydrolase (OPG046).